A 290-amino-acid polypeptide reads, in one-letter code: tRNA-cytidine(32) 2-sulfurtransferase (290 aa).

The PP-loop motif motif lies at 66 to 71 (SGGKDS). Positions 141, 144, and 232 each coordinate [4Fe-4S] cluster.

Belongs to the TtcA family. In terms of assembly, homodimer. Mg(2+) serves as cofactor. [4Fe-4S] cluster is required as a cofactor.

The protein localises to the cytoplasm. It catalyses the reaction cytidine(32) in tRNA + S-sulfanyl-L-cysteinyl-[cysteine desulfurase] + AH2 + ATP = 2-thiocytidine(32) in tRNA + L-cysteinyl-[cysteine desulfurase] + A + AMP + diphosphate + H(+). The protein operates within tRNA modification. Functionally, catalyzes the ATP-dependent 2-thiolation of cytidine in position 32 of tRNA, to form 2-thiocytidine (s(2)C32). The sulfur atoms are provided by the cysteine/cysteine desulfurase (IscS) system. This is tRNA-cytidine(32) 2-sulfurtransferase from Rhizobium etli (strain ATCC 51251 / DSM 11541 / JCM 21823 / NBRC 15573 / CFN 42).